Consider the following 661-residue polypeptide: Peroxisomal acyl-coenzyme A oxidase 1 (661 aa).

Position 26 is a phosphoserine (serine 26). Lysine 65 bears the N6-acetyllysine mark. N6-succinyllysine occurs at positions 89 and 90. Threonine 139 provides a ligand contact to FAD. An N6-succinyllysine modification is found at lysine 159. Glycine 178 contributes to the FAD binding site. N6-acetyllysine is present on lysine 216. N6-succinyllysine is present on lysine 241. Residues lysine 255, lysine 267, and lysine 272 each carry the N6-acetyllysine modification. The residue at position 349 (lysine 349) is an N6-succinyllysine. The Proton acceptor role is filled by glutamate 421. An N6-acetyllysine; alternate mark is found at lysine 437 and lysine 446. 2 positions are modified to N6-succinyllysine; alternate: lysine 437 and lysine 446. The residue at position 500 (lysine 500) is an N6-acetyllysine. Residue lysine 512 is modified to N6-acetyllysine; alternate. Residue lysine 512 is modified to N6-succinyllysine; alternate. Lysine 542 is modified (N6-succinyllysine). Lysine 637 carries the post-translational modification N6-acetyllysine; alternate. Lysine 637 bears the N6-succinyllysine; alternate mark. Lysine 643 is subject to N6-succinyllysine. Serine 649 is subject to Phosphoserine. An N6-acetyllysine modification is found at lysine 652. The residue at position 655 (lysine 655) is an N6-succinyllysine. The Microbody targeting signal motif lies at 659–661 (SKL).

Belongs to the acyl-CoA oxidase family. Homodimer. The enzyme contains three components A, B and C, the latter two being produced from the first by a proteolytic cleavage. Interacts with LONP2. FAD is required as a cofactor. In terms of tissue distribution, expressed in Schwann cells. Expressed (at protein level) in liver.

It is found in the peroxisome. The enzyme catalyses a 2,3-saturated acyl-CoA + O2 = a (2E)-enoyl-CoA + H2O2. The catalysed reaction is hexadecanoyl-CoA + O2 = (2E)-hexadecenoyl-CoA + H2O2. It catalyses the reaction dodecanoyl-CoA + O2 = (2E)-dodecenoyl-CoA + H2O2. It carries out the reaction octanoyl-CoA + O2 = (2E)-octenoyl-CoA + H2O2. The enzyme catalyses decanoyl-CoA + O2 = (2E)-decenoyl-CoA + H2O2. The catalysed reaction is tetradecanoyl-CoA + O2 = (2E)-tetradecenoyl-CoA + H2O2. It catalyses the reaction hexadecanedioyl-CoA + O2 = (2E)-hexadecenedioyl-CoA + H2O2. It carries out the reaction tetracosanoyl-CoA + O2 = (2E)-tetracosenoyl-CoA + H2O2. The enzyme catalyses glutaryl-CoA + O2 = (2E)-glutaconyl-CoA + H2O2. The catalysed reaction is hexanoyl-CoA + O2 = (2E)-hexenoyl-CoA + H2O2. It catalyses the reaction octadecanoyl-CoA + O2 = (2E)-octadecenoyl-CoA + H2O2. It carries out the reaction (5Z,8Z,11Z,14Z,17Z)-eicosapentaenoyl-CoA + O2 = (2E,5Z,8Z,11Z,14Z,17Z)-icosahexaenoyl-CoA + H2O2. The enzyme catalyses (6Z,9Z,12Z,15Z,18Z,21Z)-tetracosahexaenoyl-CoA + O2 = (2E,6Z,9Z,12Z,15Z,18Z,21Z)-tetracosaheptaenoyl-CoA + H2O2. It functions in the pathway lipid metabolism; peroxisomal fatty acid beta-oxidation. Its function is as follows. Involved in the initial and rate-limiting step of peroxisomal beta-oxidation of straight-chain saturated and unsaturated very-long-chain fatty acids. Catalyzes the desaturation of fatty acyl-CoAs such as palmitoyl-CoA (hexadecanoyl-CoA) to 2-trans-enoyl-CoAs ((2E)-enoyl-CoAs) such as (2E)-hexadecenoyl-CoA, and donates electrons directly to molecular oxygen (O(2)), thereby producing hydrogen peroxide (H(2)O(2)). In terms of biological role, shows highest activity against medium-chain fatty acyl-CoAs. Shows optimum activity with a chain length of 10 carbons (decanoyl-CoA) in vitro. Functionally, is active against a much broader range of substrates and shows activity towards long-chain acyl-CoAs. The sequence is that of Peroxisomal acyl-coenzyme A oxidase 1 from Rattus norvegicus (Rat).